Here is a 424-residue protein sequence, read N- to C-terminus: MLDIKRIRTDFEAVAEKLATRGVDAAVLNEMKEIDAKRRNILVKVETLKAERNTVSAEIAQAKRNKENTDDKIAAMQNLSAEVKALDAELAEIDAKLTEFTTTLPNIPADSVPVGADEDDNVEVRRWGTPREFDFEPKAHWDLGEDLGILDWERGGKVTGARFLFYKGLGARLERAIYNFMLDEHGKEGYTEVITPYIVNHDSMFGTGQYPKFKEDTFELSDTNFVLIPTAEVPLANYYRDEILDGKDLPIYFTAMSPSFRSEAGSAGRDTRGLIRLHQFHKVEMVKFAKPEESYEELEKMTANAENILQKLNLPYRVVALSTGDMGFSAAKTYDLEVWIPAQNNYREISSCSNTEDFQARRAQIRYRDEADGKVKLLHTLNGSGLAVGRTVAAILENYQNEDGSVTIPEALRPYMGGAEVIKP.

230–232 (TAE) is an L-serine binding site. Residue 261 to 263 (RSE) coordinates ATP. Glutamate 284 contributes to the L-serine binding site. 348 to 351 (EISS) serves as a coordination point for ATP. Serine 384 is a binding site for L-serine.

It belongs to the class-II aminoacyl-tRNA synthetase family. Type-1 seryl-tRNA synthetase subfamily. As to quaternary structure, homodimer. The tRNA molecule binds across the dimer.

The protein localises to the cytoplasm. It carries out the reaction tRNA(Ser) + L-serine + ATP = L-seryl-tRNA(Ser) + AMP + diphosphate + H(+). It catalyses the reaction tRNA(Sec) + L-serine + ATP = L-seryl-tRNA(Sec) + AMP + diphosphate + H(+). Its pathway is aminoacyl-tRNA biosynthesis; selenocysteinyl-tRNA(Sec) biosynthesis; L-seryl-tRNA(Sec) from L-serine and tRNA(Sec): step 1/1. Its function is as follows. Catalyzes the attachment of serine to tRNA(Ser). Is also able to aminoacylate tRNA(Sec) with serine, to form the misacylated tRNA L-seryl-tRNA(Sec), which will be further converted into selenocysteinyl-tRNA(Sec). This chain is Serine--tRNA ligase, found in Streptococcus pneumoniae (strain 70585).